A 135-amino-acid chain; its full sequence is Small ribosomal subunit protein uS12 (135 aa).

Positions 1–20 (MPTINQLVRKGRHSKVTKSK) are disordered. Residues 9-18 (RKGRHSKVTK) are compositionally biased toward basic residues.

It belongs to the universal ribosomal protein uS12 family. In terms of assembly, part of the 30S ribosomal subunit. Contacts proteins S8 and S17. May interact with IF1 in the 30S initiation complex.

In terms of biological role, with S4 and S5 plays an important role in translational accuracy. Interacts with and stabilizes bases of the 16S rRNA that are involved in tRNA selection in the A site and with the mRNA backbone. Located at the interface of the 30S and 50S subunits, it traverses the body of the 30S subunit contacting proteins on the other side and probably holding the rRNA structure together. The combined cluster of proteins S8, S12 and S17 appears to hold together the shoulder and platform of the 30S subunit. The sequence is that of Small ribosomal subunit protein uS12 from Lactobacillus acidophilus (strain ATCC 700396 / NCK56 / N2 / NCFM).